We begin with the raw amino-acid sequence, 316 residues long: Transaldolase (316 aa).

Catalysis depends on lysine 132, which acts as the Schiff-base intermediate with substrate.

This sequence belongs to the transaldolase family. Type 1 subfamily. As to quaternary structure, homodimer.

It is found in the cytoplasm. It catalyses the reaction D-sedoheptulose 7-phosphate + D-glyceraldehyde 3-phosphate = D-erythrose 4-phosphate + beta-D-fructose 6-phosphate. The protein operates within carbohydrate degradation; pentose phosphate pathway; D-glyceraldehyde 3-phosphate and beta-D-fructose 6-phosphate from D-ribose 5-phosphate and D-xylulose 5-phosphate (non-oxidative stage): step 2/3. In terms of biological role, transaldolase is important for the balance of metabolites in the pentose-phosphate pathway. This is Transaldolase from Marinomonas sp. (strain MWYL1).